Reading from the N-terminus, the 254-residue chain is Hydroxyacylglutathione hydrolase (254 aa).

Positions 54, 56, 58, 59, 111, 130, and 168 each coordinate Zn(2+).

This sequence belongs to the metallo-beta-lactamase superfamily. Glyoxalase II family. Monomer. It depends on Zn(2+) as a cofactor.

It catalyses the reaction an S-(2-hydroxyacyl)glutathione + H2O = a 2-hydroxy carboxylate + glutathione + H(+). The protein operates within secondary metabolite metabolism; methylglyoxal degradation; (R)-lactate from methylglyoxal: step 2/2. Its function is as follows. Thiolesterase that catalyzes the hydrolysis of S-D-lactoyl-glutathione to form glutathione and D-lactic acid. The sequence is that of Hydroxyacylglutathione hydrolase from Legionella pneumophila (strain Lens).